Here is a 298-residue protein sequence, read N- to C-terminus: Lipoyl synthase (298 aa).

C40, C45, C51, C67, C71, C74, and S280 together coordinate [4Fe-4S] cluster. Positions 53–269 constitute a Radical SAM core domain; it reads AVRRTATFMI…KEIAMQKGFS (217 aa).

Belongs to the radical SAM superfamily. Lipoyl synthase family. Requires [4Fe-4S] cluster as cofactor.

It is found in the cytoplasm. It carries out the reaction [[Fe-S] cluster scaffold protein carrying a second [4Fe-4S](2+) cluster] + N(6)-octanoyl-L-lysyl-[protein] + 2 oxidized [2Fe-2S]-[ferredoxin] + 2 S-adenosyl-L-methionine + 4 H(+) = [[Fe-S] cluster scaffold protein] + N(6)-[(R)-dihydrolipoyl]-L-lysyl-[protein] + 4 Fe(3+) + 2 hydrogen sulfide + 2 5'-deoxyadenosine + 2 L-methionine + 2 reduced [2Fe-2S]-[ferredoxin]. It functions in the pathway protein modification; protein lipoylation via endogenous pathway; protein N(6)-(lipoyl)lysine from octanoyl-[acyl-carrier-protein]. In terms of biological role, catalyzes the radical-mediated insertion of two sulfur atoms into the C-6 and C-8 positions of the octanoyl moiety bound to the lipoyl domains of lipoate-dependent enzymes, thereby converting the octanoylated domains into lipoylated derivatives. This is Lipoyl synthase from Bacillus subtilis (strain 168).